A 353-amino-acid polypeptide reads, in one-letter code: Photosystem II D2 protein (353 aa).

Threonine 2 is modified (N-acetylthreonine). Position 2 is a phosphothreonine (threonine 2). Residues 41 to 61 (CAYFAVGGWFTGTTFVTSWYT) form a helical membrane-spanning segment. Histidine 118 is a binding site for chlorophyll a. The chain crosses the membrane as a helical span at residues 125–141 (GFMLRQFELARSVQLRP). Residues glutamine 130 and asparagine 143 each contribute to the pheophytin a site. Residues 153–166 (VFVSVFLIYPLGQS) traverse the membrane as a helical segment. Chlorophyll a is bound at residue histidine 198. Residues 208–228 (AALLCAIHGATVENTLFEDGD) form a helical membrane-spanning segment. A plastoquinone is bound by residues histidine 215 and phenylalanine 262. Histidine 215 serves as a coordination point for Fe cation. Fe cation is bound at residue histidine 269. The chain crosses the membrane as a helical span at residues 279 to 295 (GLWMSALGVVGLALNLR).

Belongs to the reaction center PufL/M/PsbA/D family. As to quaternary structure, PSII is composed of 1 copy each of membrane proteins PsbA, PsbB, PsbC, PsbD, PsbE, PsbF, PsbH, PsbI, PsbJ, PsbK, PsbL, PsbM, PsbT, PsbX, PsbY, PsbZ, Psb30/Ycf12, at least 3 peripheral proteins of the oxygen-evolving complex and a large number of cofactors. It forms dimeric complexes. The D1/D2 heterodimer binds P680, chlorophylls that are the primary electron donor of PSII, and subsequent electron acceptors. It shares a non-heme iron and each subunit binds pheophytin, quinone, additional chlorophylls, carotenoids and lipids. There is also a Cl(-1) ion associated with D1 and D2, which is required for oxygen evolution. The PSII complex binds additional chlorophylls, carotenoids and specific lipids. is required as a cofactor.

It is found in the plastid. The protein resides in the chloroplast thylakoid membrane. It catalyses the reaction 2 a plastoquinone + 4 hnu + 2 H2O = 2 a plastoquinol + O2. Its function is as follows. Photosystem II (PSII) is a light-driven water:plastoquinone oxidoreductase that uses light energy to abstract electrons from H(2)O, generating O(2) and a proton gradient subsequently used for ATP formation. It consists of a core antenna complex that captures photons, and an electron transfer chain that converts photonic excitation into a charge separation. The D1/D2 (PsbA/PsbD) reaction center heterodimer binds P680, the primary electron donor of PSII as well as several subsequent electron acceptors. D2 is needed for assembly of a stable PSII complex. This is Photosystem II D2 protein from Guizotia abyssinica (Niger).